Reading from the N-terminus, the 113-residue chain is Cholecystoxin (113 aa).

The signal sequence occupies residues 1-20 (MYGGICLCVLLAVLAISSSG). A propeptide spanning residues 21 to 79 (QHISRSLNGNSLAAAIEQNFPEKHRPARTPDSNQRVESNIDEKANLGVLLARYLQKARR) is cleaved from the precursor. Positions 77-97 (ARRGTNGKPPDPKKESQDYLG) are disordered. Residue Y95 is modified to Sulfotyrosine. F101 is subject to Phenylalanine amide. Positions 102–113 (GRRSAEEYEYSS) are excised as a propeptide.

The protein belongs to the gastrin/cholecystokinin family. As to expression, expressed by the mandibular venom gland.

The protein localises to the secreted. In terms of biological role, cholecystokinin-22: hypotensive neuropeptide that binds cholecystokinin receptor type A receptor (CCKAR). Its function is as follows. Cholecystokinin-8: hypotensive neuropeptide that binds cholecystokinin receptor type A receptor (CCKAR). This chain is Cholecystoxin, found in Varanus varius (Lace monitor lizard).